Here is a 160-residue protein sequence, read N- to C-terminus: SsrA-binding protein (160 aa).

It belongs to the SmpB family.

It localises to the cytoplasm. Required for rescue of stalled ribosomes mediated by trans-translation. Binds to transfer-messenger RNA (tmRNA), required for stable association of tmRNA with ribosomes. tmRNA and SmpB together mimic tRNA shape, replacing the anticodon stem-loop with SmpB. tmRNA is encoded by the ssrA gene; the 2 termini fold to resemble tRNA(Ala) and it encodes a 'tag peptide', a short internal open reading frame. During trans-translation Ala-aminoacylated tmRNA acts like a tRNA, entering the A-site of stalled ribosomes, displacing the stalled mRNA. The ribosome then switches to translate the ORF on the tmRNA; the nascent peptide is terminated with the 'tag peptide' encoded by the tmRNA and targeted for degradation. The ribosome is freed to recommence translation, which seems to be the essential function of trans-translation. The chain is SsrA-binding protein from Citrobacter koseri (strain ATCC BAA-895 / CDC 4225-83 / SGSC4696).